The primary structure comprises 359 residues: Phosphate acyltransferase (359 aa).

The segment at 337-359 (AAGAAQPAPETEVPGAHPSPHVA) is disordered.

This sequence belongs to the PlsX family. As to quaternary structure, homodimer. Probably interacts with PlsY.

The protein resides in the cytoplasm. It carries out the reaction a fatty acyl-[ACP] + phosphate = an acyl phosphate + holo-[ACP]. It functions in the pathway lipid metabolism; phospholipid metabolism. In terms of biological role, catalyzes the reversible formation of acyl-phosphate (acyl-PO(4)) from acyl-[acyl-carrier-protein] (acyl-ACP). This enzyme utilizes acyl-ACP as fatty acyl donor, but not acyl-CoA. This chain is Phosphate acyltransferase, found in Cupriavidus necator (strain ATCC 17699 / DSM 428 / KCTC 22496 / NCIMB 10442 / H16 / Stanier 337) (Ralstonia eutropha).